The chain runs to 221 residues: ATP phosphoribosyltransferase (221 aa).

Belongs to the ATP phosphoribosyltransferase family. Short subfamily. As to quaternary structure, heteromultimer composed of HisG and HisZ subunits.

The protein resides in the cytoplasm. The enzyme catalyses 1-(5-phospho-beta-D-ribosyl)-ATP + diphosphate = 5-phospho-alpha-D-ribose 1-diphosphate + ATP. It participates in amino-acid biosynthesis; L-histidine biosynthesis; L-histidine from 5-phospho-alpha-D-ribose 1-diphosphate: step 1/9. Catalyzes the condensation of ATP and 5-phosphoribose 1-diphosphate to form N'-(5'-phosphoribosyl)-ATP (PR-ATP). Has a crucial role in the pathway because the rate of histidine biosynthesis seems to be controlled primarily by regulation of HisG enzymatic activity. This chain is ATP phosphoribosyltransferase, found in Rhizorhabdus wittichii (strain DSM 6014 / CCUG 31198 / JCM 15750 / NBRC 105917 / EY 4224 / RW1) (Sphingomonas wittichii).